The chain runs to 376 residues: ATP phosphoribosyltransferase regulatory subunit (376 aa).

It belongs to the class-II aminoacyl-tRNA synthetase family. HisZ subfamily. Heteromultimer composed of HisG and HisZ subunits.

The protein resides in the cytoplasm. The protein operates within amino-acid biosynthesis; L-histidine biosynthesis; L-histidine from 5-phospho-alpha-D-ribose 1-diphosphate: step 1/9. In terms of biological role, required for the first step of histidine biosynthesis. May allow the feedback regulation of ATP phosphoribosyltransferase activity by histidine. This chain is ATP phosphoribosyltransferase regulatory subunit, found in Brucella canis (strain ATCC 23365 / NCTC 10854 / RM-666).